A 342-amino-acid polypeptide reads, in one-letter code: S-adenosylmethionine:tRNA ribosyltransferase-isomerase (342 aa).

The protein belongs to the QueA family. Monomer.

It localises to the cytoplasm. The enzyme catalyses 7-aminomethyl-7-carbaguanosine(34) in tRNA + S-adenosyl-L-methionine = epoxyqueuosine(34) in tRNA + adenine + L-methionine + 2 H(+). It participates in tRNA modification; tRNA-queuosine biosynthesis. Its function is as follows. Transfers and isomerizes the ribose moiety from AdoMet to the 7-aminomethyl group of 7-deazaguanine (preQ1-tRNA) to give epoxyqueuosine (oQ-tRNA). This is S-adenosylmethionine:tRNA ribosyltransferase-isomerase from Streptococcus pyogenes serotype M6 (strain ATCC BAA-946 / MGAS10394).